The sequence spans 429 residues: uncharacterized protein (429 aa).

Positions 1–12 (MSDSKEDIRNGQ) are enriched in basic and acidic residues. Disordered stretches follow at residues 1 to 63 (MSDS…APEA), 257 to 306 (RSRA…SDRM), and 320 to 429 (YRGY…SDSE). Positions 328 to 362 (EENEEDDLGDFIAEEEEEEEQEEEQEEDEEDEEEV) are enriched in acidic residues. Residues 369–378 (KGFDADKEAS) show a composition bias toward basic and acidic residues.

The protein belongs to the LEO1 family.

The protein localises to the nucleus. This is an uncharacterized protein from Schizosaccharomyces pombe (strain 972 / ATCC 24843) (Fission yeast).